A 956-amino-acid chain; its full sequence is MASKRKSTTPCMIPVKTVVLQDASMEAQPAETLPEGPQQDLPPEASAASSEAAQNPSSTDGSTLANGHRSTLDGYLYSCKYCDFRSHDMTQFVGHMNSEHTDFNKDPTFVCSGCSFLAKTPEGLSLHNATCHSGEASFVWNVAKPDNHVVVEQSIPESTSTPDLAGEPSAEGADGQAEIIITKTPIMKIMKGKAEAKKIHTLKENVPSQPVGEALPKLSTGEMEVREGDHSFINGAVPVSQASASSAKNPHAANGPLIGTVPVLPAGIAQFLSLQQQPPVHAQHHVHQPLPTAKALPKVMIPLSSIPTYNAAMDSNSFLKNSFHKFPYPTKAELCYLTVVTKYPEEQLKIWFTAQRLKQGISWSPEEIEDARKKMFNTVIQSVPQPTITVLNTPLVASAGNVQHLIQAALPGHVVGQPEGTGGGLLVTQPLMANGLQATSSPLPLTVTSVPKQPGVAPINTVCSNTTSAVKVVNAAQSLLTACPSITSQAFLDASIYKNKKSHEQLSALKGSFCRNQFPGQSEVEHLTKVTGLSTREVRKWFSDRRYHCRNLKGSRAMIPGDHSSIIIDSVPEVSFSPSSKVPEVTCIPTTATLATHPSAKRQSWHQTPDFTPTKYKERAPEQLRALESSFAQNPLPLDEELDRLRSETKMTRREIDSWFSERRKKVNAEETKKAEENASQEEEEAAEDEGGEEDLASELRVSGENGSLEMPSSHILAERKVSPIKINLKNLRVTEANGRNEIPGLGACDPEDDESNKLAEQLPGKVSCKKTAQQRHLLRQLFVQTQWPSNQDYDSIMAQTGLPRPEVVRWFGDSRYALKNGQLKWYEDYKRGNFPPGLLVIAPGNRELLQDYYMTHKMLYEEDLQNLCDKTQMSSQQVKQWFAEKMGEETRAVADTGSEDQGPGTGELTAVHKGMGDTYSEVSENSESWEPRVPEASSEPFDTSSPQAGRQLETD.

Residues 1–107 (MASKRKSTTP…SEHTDFNKDP (107 aa)) form a required for nuclear localization region. A disordered region spans residues 22 to 66 (DASMEAQPAETLPEGPQQDLPPEASAASSEAAQNPSSTDGSTLAN). The segment covering 42–58 (PPEASAASSEAAQNPSS) has biased composition (low complexity). 2 C2H2-type zinc fingers span residues 77-100 (YSCK…NSEH) and 109-132 (FVCS…ATCH). The interval 242–488 (ASASSAKNPH…LLTACPSITS (247 aa)) is required for homodimerization and interaction with NFYA. The tract at residues 303–502 (LSSIPTYNAA…DASIYKNKKS (200 aa)) is required for repressor activity. 2 consecutive DNA-binding regions (homeobox) follow at residues 304–363 (SSIP…GISW) and 494–553 (ASIY…RNLK). A required for nuclear localization region spans residues 497 to 555 (YKNKKSHEQLSALKGSFCRNQFPGQSEVEHLTKVTGLSTREVRKWFSDRRYHCRNLKGS). 2 disordered regions span residues 598–618 (PSAK…KYKE) and 666–695 (KVNA…GEED). Residues Ser-599 and Ser-604 each carry the phosphoserine modification. Residues 612-671 (TPTKYKERAPEQLRALESSFAQNPLPLDEELDRLRSETKMTRREIDSWFSERRKKVNAEE) constitute a DNA-binding region (homeobox 3). Over residues 666–677 (KVNAEETKKAEE) the composition is skewed to basic and acidic residues. Residues 679 to 695 (ASQEEEEAAEDEGGEED) are compositionally biased toward acidic residues. Phosphoserine occurs at positions 680, 708, and 723. 2 consecutive DNA-binding regions (homeobox) follow at residues 764-823 (PGKV…KNGQ) and 835-894 (FPPG…TRAV). The segment at 890-956 (ETRAVADTGS…PQAGRQLETD (67 aa)) is disordered. 2 positions are modified to phosphoserine: Ser-927 and Ser-946.

It belongs to the ZHX family. As to quaternary structure, homodimer (via homeobox domain 1). Heterodimer with ZHX1 (via homeobox domain 1). Heterodimer with ZHX2 (via homeobox domain 1). Heterodimerization with ZHX1 is a prerequisite for repressor activity. Interacts with NFYA. In terms of tissue distribution, widely expressed. High expression in kidney. Expressed during osteogenic differentiation.

It is found in the nucleus. Acts as a transcriptional repressor. Involved in the early stages of mesenchymal stem cell (MSC) osteogenic differentiation. Is a regulator of podocyte gene expression during primary glomerula disease. Binds to promoter DNA. This is Zinc fingers and homeoboxes protein 3 (ZHX3) from Homo sapiens (Human).